The chain runs to 775 residues: Protein U58 (775 aa).

Belongs to the herpesviridae UL87 family.

The chain is Protein U58 (U58) from Homo sapiens (Human).